Here is a 456-residue protein sequence, read N- to C-terminus: Cyclic AMP-responsive element-binding protein 3-like protein 3 (456 aa).

2 disordered regions span residues 1-20 and 47-120; these read MDGDLAIGKMASSTSPMGPI and GHGE…KGPC. Over 1–317 the chain is Cytoplasmic; that stretch reads MDGDLAIGKM…STSKSAQTGT (317 aa). A compositionally biased stretch (polar residues) spans 71-85; it reads DSDSPTWSPAASDSG. The region spanning 238–301 is the bZIP domain; it reads MLKKIRRKIR…LSLLEQLKKL (64 aa). Residues 240–269 form a basic motif region; that stretch reads KKIRRKIRNKQSAQESRKKKKEYIDGLETR. The interval 280-301 is leucine-zipper; the sequence is LQRKVLHLEKQNLSLLEQLKKL. K289 is covalently cross-linked (Glycyl lysine isopeptide (Lys-Gly) (interchain with G-Cter in ubiquitin)). Residues 318-338 traverse the membrane as a helical; Signal-anchor for type II membrane protein segment; it reads CIAVLLFSFALIVLPSISPFA. At 339 to 456 the chain is on the lumenal side; it reads SNRAESPGDF…VGLEAAGGEL (118 aa). Disordered stretches follow at residues 365–423 and 435–456; these read RVAP…QGNS and CAPPEPAVSPGHVGLEAAGGEL. N408 and N415 each carry an N-linked (GlcNAc...) asparagine glycan.

This sequence belongs to the bZIP family. ATF subfamily. Binds DNA as a dimer. May form homodimers. Interacts with ATF6. Interacts with SYNV1/HRD1; this interaction leads to CREB3L3 ubiquitination and proteasomal degradation. Post-translationally, controlled by regulated intramembrane proteolysis (RIP). Following ER stress a fragment containing the cytoplasmic transcription factor domain is released by proteolysis. The cleavage seems to be performed sequentially by site-1 and site-2 proteases (PS1 and PS2). In terms of processing, N-glycosylation is required for optimal proteolytic activation. Ubiquitinated at Lys-289 by SYNV1/HRD1 via 'Lys-27'-linked ubiquitin.

It is found in the endoplasmic reticulum membrane. The protein resides in the nucleus. In terms of biological role, transcription factor that may act during endoplasmic reticulum stress by activating unfolded protein response target genes. Activated in response to cAMP stimulation. In vitro, binds the cAMP response element (CRE). Activates transcription through box-B element and CRE. Seems to function synergistically with ATF6. In acute inflammatory response, may activate expression of acute phase response (APR) genes. May be involved in growth suppression. Regulates FGF21 transcription. Plays a crucial role in the regulation of triglyceride metabolism and is required for the maintenance of normal plasma triglyceride concentrations. The sequence is that of Cyclic AMP-responsive element-binding protein 3-like protein 3 (CREB3L3) from Bos taurus (Bovine).